The following is a 170-amino-acid chain: Cathelicidin antimicrobial peptide (170 aa).

Positions 1–30 (MKTQRDGPSLGRWSLVLLLLGLVMPLAIVA) are cleaved as a signal peptide. The propeptide at 31–131 (QVLSYQEAVL…DISCDKDNRR (101 aa)) is cathelin-like domain (CLD). Cystine bridges form between Cys86/Cys97 and Cys108/Cys125. The segment at 150–162 (LKKIGQKIKDFLG) is active core.

The protein belongs to the cathelicidin family. In terms of assembly, monomer, homodimer or homotrimer (in vitro). Oligomerizes as tetra- or hexamer in solution (in vitro). Proteolytically cleaved by proteinase PRTN3 into antibacterial peptide LL-37. Proteolytically cleaved by cathepsin CTSG and neutrophil elastase ELANE. Post-translationally, resistant to proteolytic degradation in solution, and when bound to both zwitterionic (mimicking mammalian membranes) and negatively charged membranes (mimicking bacterial membranes). In terms of processing, after secretion onto the skin surface, the CAMP gene product is processed by a serine protease-dependent mechanism into multiple novel antimicrobial peptides distinct from and shorter than cathelicidin LL-37. These peptides show enhanced antimicrobial action, acquiring the ability to kill skin pathogens such as S.aureus, E.coli and C.albicans. These peptides have lost the ability to stimulate CXCL8/IL8 release from keratinocytes. The peptides act synergistically, killing bacteria at lower concentrations when present together, and maintain activity at increased salt condition.

Its subcellular location is the secreted. The protein localises to the vesicle. Functionally, antimicrobial protein that is an integral component of the innate immune system. Binds to bacterial lipopolysaccharides (LPS). Acts via neutrophil N-formyl peptide receptors to enhance the release of CXCL2. Postsecretory processing generates multiple cathelicidin antimicrobial peptides with various lengths which act as a topical antimicrobial defense in sweat on skin. The unprocessed precursor form, cathelicidin antimicrobial peptide, inhibits the growth of Gram-negative E.coli and E.aerogenes with efficiencies comparable to that of the mature peptide LL-37 (in vitro). In terms of biological role, antimicrobial peptide that is an integral component of the innate immune system. Binds to bacterial lipopolysaccharides (LPS). Causes membrane permeabilization by forming transmembrane pores (in vitro). Causes lysis of E.coli. Exhibits antimicrobial activity against Gram-negative bacteria such as P.aeruginosa, S.typhimurium, E.aerogenes, E.coli and P.syringae, Gram-positive bacteria such as L.monocytogenes, S.epidermidis, S.pyogenes and S.aureus, as well as vancomycin-resistant enterococci (in vitro). Exhibits antimicrobial activity against methicillin-resistant S.aureus, P.mirabilis, and C.albicans in low-salt media, but not in media containing 100 mM NaCl (in vitro). Forms chiral supramolecular assemblies with quinolone signal (PQS) molecules of P.aeruginosa, which may lead to interference of bacterial quorum signaling and perturbance of bacterial biofilm formation. May form supramolecular fiber-like assemblies on bacterial membranes. Induces cytokine and chemokine producation as well as TNF/TNFA and CSF2/GMCSF production in normal human keratinocytes. Exhibits hemolytic activity against red blood cells. Its function is as follows. Exhibits antimicrobial activity against E.coli and B.megaterium (in vitro). This is Cathelicidin antimicrobial peptide from Chlorocebus aethiops (Green monkey).